A 180-amino-acid polypeptide reads, in one-letter code: Translation initiation factor IF-3 (180 aa).

This sequence belongs to the IF-3 family. In terms of assembly, monomer.

It is found in the cytoplasm. Its function is as follows. IF-3 binds to the 30S ribosomal subunit and shifts the equilibrium between 70S ribosomes and their 50S and 30S subunits in favor of the free subunits, thus enhancing the availability of 30S subunits on which protein synthesis initiation begins. The polypeptide is Translation initiation factor IF-3 (Pasteurella multocida (strain Pm70)).